The primary structure comprises 147 residues: Protein SPMIP3 (147 aa).

This is Protein SPMIP3 from Homo sapiens (Human).